The chain runs to 375 residues: Carbamoyl phosphate synthase small chain (375 aa).

Residues 1-180 (MSKALLVLED…DAYVVEPKGK (180 aa)) form a CPSase region. L-glutamine-binding residues include serine 46, glycine 232, and glycine 234. One can recognise a Glutamine amidotransferase type-1 domain in the interval 184-375 (TVAALDLGIK…SFVELMAAQR (192 aa)). The active-site Nucleophile is the cysteine 260. Positions 261, 264, 302, 304, and 305 each coordinate L-glutamine. Residues histidine 350 and glutamate 352 contribute to the active site.

Belongs to the CarA family. Composed of two chains; the small (or glutamine) chain promotes the hydrolysis of glutamine to ammonia, which is used by the large (or ammonia) chain to synthesize carbamoyl phosphate. Tetramer of heterodimers (alpha,beta)4.

The catalysed reaction is hydrogencarbonate + L-glutamine + 2 ATP + H2O = carbamoyl phosphate + L-glutamate + 2 ADP + phosphate + 2 H(+). It catalyses the reaction L-glutamine + H2O = L-glutamate + NH4(+). It functions in the pathway amino-acid biosynthesis; L-arginine biosynthesis; carbamoyl phosphate from bicarbonate: step 1/1. The protein operates within pyrimidine metabolism; UMP biosynthesis via de novo pathway; (S)-dihydroorotate from bicarbonate: step 1/3. In terms of biological role, small subunit of the glutamine-dependent carbamoyl phosphate synthetase (CPSase). CPSase catalyzes the formation of carbamoyl phosphate from the ammonia moiety of glutamine, carbonate, and phosphate donated by ATP, constituting the first step of 2 biosynthetic pathways, one leading to arginine and/or urea and the other to pyrimidine nucleotides. The small subunit (glutamine amidotransferase) binds and cleaves glutamine to supply the large subunit with the substrate ammonia. In Mycobacterium leprae (strain TN), this protein is Carbamoyl phosphate synthase small chain.